Here is a 285-residue protein sequence, read N- to C-terminus: Small ribosomal subunit protein uS5x (285 aa).

A compositionally biased stretch (basic and acidic residues) spans 1-19 (MAERGGERGVERGGERGDF). Positions 1 to 51 (MAERGGERGVERGGERGDFGRGFGGRGGRGDRGGRGRGGRGGRRGGRASEE) are disordered. The segment covering 35–46 (RGRGGRGGRRGG) has biased composition (basic residues). In terms of domain architecture, S5 DRBM spans 96–159 (LKDEVMKIMP…ILAKLSVVPV (64 aa)).

This sequence belongs to the universal ribosomal protein uS5 family. Interacts with MBD6.

In terms of biological role, component of the ribosome, a large ribonucleoprotein complex responsible for the synthesis of proteins in the cell. The small ribosomal subunit (SSU) binds messenger RNAs (mRNAs) and translates the encoded message by selecting cognate aminoacyl-transfer RNA (tRNA) molecules. The large subunit (LSU) contains the ribosomal catalytic site termed the peptidyl transferase center (PTC), which catalyzes the formation of peptide bonds, thereby polymerizing the amino acids delivered by tRNAs into a polypeptide chain. The nascent polypeptides leave the ribosome through a tunnel in the LSU and interact with protein factors that function in enzymatic processing, targeting, and the membrane insertion of nascent chains at the exit of the ribosomal tunnel. Plays a role in the assembly and function of the 40S ribosomal subunit. Mutations in this protein affects the control of translational fidelity. Involved in nucleolar processing of pre-18S ribosomal RNA and ribosome assembly. Also involved in RNA-directed DNA methylation (RdDM). In Arabidopsis thaliana (Mouse-ear cress), this protein is Small ribosomal subunit protein uS5x.